Reading from the N-terminus, the 156-residue chain is Ribosomal RNA large subunit methyltransferase H (156 aa).

S-adenosyl-L-methionine is bound by residues leucine 73, glycine 104, and 123 to 128; that span reads LSALTL.

Belongs to the RNA methyltransferase RlmH family. In terms of assembly, homodimer.

The protein resides in the cytoplasm. It catalyses the reaction pseudouridine(1915) in 23S rRNA + S-adenosyl-L-methionine = N(3)-methylpseudouridine(1915) in 23S rRNA + S-adenosyl-L-homocysteine + H(+). Specifically methylates the pseudouridine at position 1915 (m3Psi1915) in 23S rRNA. The chain is Ribosomal RNA large subunit methyltransferase H from Shewanella baltica (strain OS223).